The chain runs to 203 residues: A-type ATP synthase subunit E (203 aa).

It belongs to the V-ATPase E subunit family. Has multiple subunits with at least A(3), B(3), C, D, E, F, H, I and proteolipid K(x).

The protein resides in the cell membrane. Component of the A-type ATP synthase that produces ATP from ADP in the presence of a proton gradient across the membrane. The sequence is that of A-type ATP synthase subunit E from Methanococcus maripaludis (strain C7 / ATCC BAA-1331).